The chain runs to 485 residues: Adenosylhomocysteinase (485 aa).

Threonine 64, aspartate 139, and glutamate 205 together coordinate substrate. Position 206-208 (206-208 (TTT)) interacts with NAD(+). Lysine 235 and aspartate 239 together coordinate substrate. NAD(+)-binding positions include asparagine 240, 269 to 274 (GYGDVG), glutamate 292, asparagine 327, 348 to 350 (IGH), and asparagine 397.

Belongs to the adenosylhomocysteinase family. As to quaternary structure, homotetramer. NAD(+) serves as cofactor.

It carries out the reaction S-adenosyl-L-homocysteine + H2O = L-homocysteine + adenosine. Its pathway is amino-acid biosynthesis; L-homocysteine biosynthesis; L-homocysteine from S-adenosyl-L-homocysteine: step 1/1. Functionally, adenosylhomocysteine is a competitive inhibitor of S-adenosyl-L-methionine-dependent methyl transferase reactions; therefore adenosylhomocysteinase may play a key role in the control of methylations via regulation of the intracellular concentration of adenosylhomocysteine. In Triticum aestivum (Wheat), this protein is Adenosylhomocysteinase (SAHH).